A 282-amino-acid chain; its full sequence is 4-hydroxy-3-methylbut-2-enyl diphosphate reductase (282 aa).

Cys-12 is a [4Fe-4S] cluster binding site. Positions 40 and 72 each coordinate (2E)-4-hydroxy-3-methylbut-2-enyl diphosphate. Residues His-40 and His-72 each contribute to the dimethylallyl diphosphate site. Isopentenyl diphosphate is bound by residues His-40 and His-72. Cys-94 lines the [4Fe-4S] cluster pocket. His-122 serves as a coordination point for (2E)-4-hydroxy-3-methylbut-2-enyl diphosphate. Residue His-122 coordinates dimethylallyl diphosphate. Residue His-122 participates in isopentenyl diphosphate binding. Glu-124 (proton donor) is an active-site residue. (2E)-4-hydroxy-3-methylbut-2-enyl diphosphate is bound at residue Thr-160. Cys-188 contributes to the [4Fe-4S] cluster binding site. Residues Ser-216, Asn-218, and Ser-260 each coordinate (2E)-4-hydroxy-3-methylbut-2-enyl diphosphate. Dimethylallyl diphosphate-binding residues include Ser-216, Asn-218, and Ser-260. Ser-216, Asn-218, and Ser-260 together coordinate isopentenyl diphosphate.

Belongs to the IspH family. Requires [4Fe-4S] cluster as cofactor.

It carries out the reaction isopentenyl diphosphate + 2 oxidized [2Fe-2S]-[ferredoxin] + H2O = (2E)-4-hydroxy-3-methylbut-2-enyl diphosphate + 2 reduced [2Fe-2S]-[ferredoxin] + 2 H(+). The catalysed reaction is dimethylallyl diphosphate + 2 oxidized [2Fe-2S]-[ferredoxin] + H2O = (2E)-4-hydroxy-3-methylbut-2-enyl diphosphate + 2 reduced [2Fe-2S]-[ferredoxin] + 2 H(+). Its pathway is isoprenoid biosynthesis; dimethylallyl diphosphate biosynthesis; dimethylallyl diphosphate from (2E)-4-hydroxy-3-methylbutenyl diphosphate: step 1/1. It functions in the pathway isoprenoid biosynthesis; isopentenyl diphosphate biosynthesis via DXP pathway; isopentenyl diphosphate from 1-deoxy-D-xylulose 5-phosphate: step 6/6. Its function is as follows. Catalyzes the conversion of 1-hydroxy-2-methyl-2-(E)-butenyl 4-diphosphate (HMBPP) into a mixture of isopentenyl diphosphate (IPP) and dimethylallyl diphosphate (DMAPP). Acts in the terminal step of the DOXP/MEP pathway for isoprenoid precursor biosynthesis. The protein is 4-hydroxy-3-methylbut-2-enyl diphosphate reductase of Geobacter metallireducens (strain ATCC 53774 / DSM 7210 / GS-15).